Here is a 588-residue protein sequence, read N- to C-terminus: Adenine deaminase (588 aa).

The protein belongs to the metallo-dependent hydrolases superfamily. Adenine deaminase family. Homodimer. Mn(2+) serves as cofactor.

The enzyme catalyses adenine + H2O + H(+) = hypoxanthine + NH4(+). This Escherichia coli (strain SE11) protein is Adenine deaminase.